The chain runs to 294 residues: Pyridoxal 5'-phosphate synthase subunit PdxS (294 aa).

D-ribose 5-phosphate is bound at residue Asp-24. The Schiff-base intermediate with D-ribose 5-phosphate role is filled by Lys-81. Gly-153 is a D-ribose 5-phosphate binding site. Arg-165 is a D-glyceraldehyde 3-phosphate binding site. D-ribose 5-phosphate contacts are provided by residues Gly-214 and 235-236 (GS).

Belongs to the PdxS/SNZ family. In the presence of PdxT, forms a dodecamer of heterodimers.

The catalysed reaction is aldehydo-D-ribose 5-phosphate + D-glyceraldehyde 3-phosphate + L-glutamine = pyridoxal 5'-phosphate + L-glutamate + phosphate + 3 H2O + H(+). It functions in the pathway cofactor biosynthesis; pyridoxal 5'-phosphate biosynthesis. In terms of biological role, catalyzes the formation of pyridoxal 5'-phosphate from ribose 5-phosphate (RBP), glyceraldehyde 3-phosphate (G3P) and ammonia. The ammonia is provided by the PdxT subunit. Can also use ribulose 5-phosphate and dihydroxyacetone phosphate as substrates, resulting from enzyme-catalyzed isomerization of RBP and G3P, respectively. This Geobacillus thermodenitrificans (strain NG80-2) protein is Pyridoxal 5'-phosphate synthase subunit PdxS.